A 778-amino-acid polypeptide reads, in one-letter code: Endonuclease MutS2 (778 aa).

332–339 contacts ATP; the sequence is GPNTGGKT. Residues 703-778 form the Smr domain; that stretch reads IDLRGKMVDE…GLGCTVVTLK (76 aa).

This sequence belongs to the DNA mismatch repair MutS family. MutS2 subfamily. As to quaternary structure, homodimer. Binds to stalled ribosomes, contacting rRNA.

Endonuclease that is involved in the suppression of homologous recombination and thus may have a key role in the control of bacterial genetic diversity. Functionally, acts as a ribosome collision sensor, splitting the ribosome into its 2 subunits. Detects stalled/collided 70S ribosomes which it binds and splits by an ATP-hydrolysis driven conformational change. Acts upstream of the ribosome quality control system (RQC), a ribosome-associated complex that mediates the extraction of incompletely synthesized nascent chains from stalled ribosomes and their subsequent degradation. Probably generates substrates for RQC. The chain is Endonuclease MutS2 from Fusobacterium nucleatum subsp. nucleatum (strain ATCC 25586 / DSM 15643 / BCRC 10681 / CIP 101130 / JCM 8532 / KCTC 2640 / LMG 13131 / VPI 4355).